The primary structure comprises 65 residues: Large ribosomal subunit protein bL35 (65 aa).

It belongs to the bacterial ribosomal protein bL35 family.

This chain is Large ribosomal subunit protein bL35, found in Prochlorococcus marinus (strain NATL1A).